Here is a 348-residue protein sequence, read N- to C-terminus: Probable tRNA pseudouridine synthase B (348 aa).

Residue Asp93 is the Nucleophile of the active site. One can recognise a PUA domain in the interval 260-335 (LKKIYILDSA…IAVDIERVFM (76 aa)).

The protein belongs to the pseudouridine synthase TruB family. Type 2 subfamily.

It catalyses the reaction uridine(55) in tRNA = pseudouridine(55) in tRNA. Its function is as follows. Could be responsible for synthesis of pseudouridine from uracil-55 in the psi GC loop of transfer RNAs. The sequence is that of Probable tRNA pseudouridine synthase B from Nanoarchaeum equitans (strain Kin4-M).